The chain runs to 70 residues: ATP synthase subunit c (70 aa).

The next 2 helical transmembrane spans lie at 4 to 24 and 47 to 67; these read IAAGIAMFGAALGAGIGNGLV and FIGVGLIESMPIISFVVALMV.

The protein belongs to the ATPase C chain family. In terms of assembly, F-type ATPases have 2 components, F(1) - the catalytic core - and F(0) - the membrane proton channel. F(1) has five subunits: alpha(3), beta(3), gamma(1), delta(1), epsilon(1). F(0) has three main subunits: a(1), b(2) and c(10-14). The alpha and beta chains form an alternating ring which encloses part of the gamma chain. F(1) is attached to F(0) by a central stalk formed by the gamma and epsilon chains, while a peripheral stalk is formed by the delta and b chains.

The protein localises to the cell membrane. F(1)F(0) ATP synthase produces ATP from ADP in the presence of a proton or sodium gradient. F-type ATPases consist of two structural domains, F(1) containing the extramembraneous catalytic core and F(0) containing the membrane proton channel, linked together by a central stalk and a peripheral stalk. During catalysis, ATP synthesis in the catalytic domain of F(1) is coupled via a rotary mechanism of the central stalk subunits to proton translocation. Its function is as follows. Key component of the F(0) channel; it plays a direct role in translocation across the membrane. A homomeric c-ring of between 10-14 subunits forms the central stalk rotor element with the F(1) delta and epsilon subunits. The polypeptide is ATP synthase subunit c (Lactiplantibacillus plantarum (strain ATCC BAA-793 / NCIMB 8826 / WCFS1) (Lactobacillus plantarum)).